The sequence spans 619 residues: Isocitrate dehydrogenase kinase/phosphatase (619 aa).

Residues Ala354 to Met360 and Lys375 contribute to the ATP site. Residue Asp409 is part of the active site.

This sequence belongs to the AceK family.

It localises to the cytoplasm. The catalysed reaction is L-seryl-[isocitrate dehydrogenase] + ATP = O-phospho-L-seryl-[isocitrate dehydrogenase] + ADP + H(+). Its function is as follows. Bifunctional enzyme which can phosphorylate or dephosphorylate isocitrate dehydrogenase (IDH) on a specific serine residue. This is a regulatory mechanism which enables bacteria to bypass the Krebs cycle via the glyoxylate shunt in response to the source of carbon. When bacteria are grown on glucose, IDH is fully active and unphosphorylated, but when grown on acetate or ethanol, the activity of IDH declines drastically concomitant with its phosphorylation. The protein is Isocitrate dehydrogenase kinase/phosphatase of Bordetella bronchiseptica (strain ATCC BAA-588 / NCTC 13252 / RB50) (Alcaligenes bronchisepticus).